A 442-amino-acid polypeptide reads, in one-letter code: UBX domain-containing protein 6 (442 aa).

Residues 1–10 (MKKFFQEIKA) are mediates interaction with LMAN1. The interval 13–111 (KFKSAGPGQK…TNSVPEPKEE (99 aa)) is disordered. The residue at position 36 (S36) is a Phosphoserine. Positions 51–63 (EAQMAAAAALARL) are VCP/p97-interacting motif (VIM). The span at 52 to 61 (AQMAAAAALA) shows a compositional bias: low complexity. A compositionally biased stretch (polar residues) spans 90-105 (EATSSNNPGAPGTNSV). A PUB domain is found at 175 to 244 (VDTIAKYLDN…GQEEFYVLGE (70 aa)). The 77-residue stretch at 332 to 408 (RKYTYALVRV…GLVPSALLTF (77 aa)) folds into the UBX domain.

As to quaternary structure, interacts with VCP through the PUB domain (via C-terminus) and VIM motif (via N-terminus); the interaction is direct. Forms a ternary complex with CAV1 and VCP. Interacts with SYVN1. Interacts with HERPUD1. Interacts with VCPKMT. May interact with DERL1. Interacts with PLAA, VCP and YOD1; may form a complex involved in macroautophagy. Interacts with LMAN1. In terms of tissue distribution, widely expressed (at protein level). Highest expression in brain (at protein level).

The protein localises to the cytoplasm. It is found in the cytosol. It localises to the membrane. The protein resides in the nucleus. Its subcellular location is the cytoskeleton. The protein localises to the microtubule organizing center. It is found in the centrosome. It localises to the early endosome membrane. The protein resides in the late endosome membrane. Its subcellular location is the lysosome membrane. In terms of biological role, may negatively regulate the ATPase activity of VCP, an ATP-driven segregase that associates with different cofactors to control a wide variety of cellular processes. As a cofactor of VCP, it may play a role in the transport of CAV1 to lysosomes for degradation. It may also play a role in endoplasmic reticulum-associated degradation (ERAD) of misfolded proteins. Together with VCP and other cofactors, it may play a role in macroautophagy, regulating for instance the clearance of damaged lysosomes. The sequence is that of UBX domain-containing protein 6 from Mus musculus (Mouse).